The chain runs to 373 residues: Dual-specificity RNA methyltransferase RlmN (373 aa).

Residue Glu94 is the Proton acceptor of the active site. Residues Glu100–Asp339 form the Radical SAM core domain. Cys107 and Cys344 are disulfide-bonded. Cys114, Cys118, and Cys121 together coordinate [4Fe-4S] cluster. Residues Gly168–Glu169, Ser200, Ser222–His224, and Asn301 contribute to the S-adenosyl-L-methionine site. Catalysis depends on Cys344, which acts as the S-methylcysteine intermediate.

Belongs to the radical SAM superfamily. RlmN family. It depends on [4Fe-4S] cluster as a cofactor.

The protein localises to the cytoplasm. The catalysed reaction is adenosine(2503) in 23S rRNA + 2 reduced [2Fe-2S]-[ferredoxin] + 2 S-adenosyl-L-methionine = 2-methyladenosine(2503) in 23S rRNA + 5'-deoxyadenosine + L-methionine + 2 oxidized [2Fe-2S]-[ferredoxin] + S-adenosyl-L-homocysteine. The enzyme catalyses adenosine(37) in tRNA + 2 reduced [2Fe-2S]-[ferredoxin] + 2 S-adenosyl-L-methionine = 2-methyladenosine(37) in tRNA + 5'-deoxyadenosine + L-methionine + 2 oxidized [2Fe-2S]-[ferredoxin] + S-adenosyl-L-homocysteine. In terms of biological role, specifically methylates position 2 of adenine 2503 in 23S rRNA and position 2 of adenine 37 in tRNAs. m2A2503 modification seems to play a crucial role in the proofreading step occurring at the peptidyl transferase center and thus would serve to optimize ribosomal fidelity. In Shewanella amazonensis (strain ATCC BAA-1098 / SB2B), this protein is Dual-specificity RNA methyltransferase RlmN.